The chain runs to 225 residues: uncharacterized protein (225 aa).

This is an uncharacterized protein from Bacillus subtilis (strain 168).